Here is a 442-residue protein sequence, read N- to C-terminus: 3-dehydroquinate synthase, chloroplastic (442 aa).

A chloroplast-targeting transit peptide spans 1 to 61 (MASSFCPKQA…TTRLKVLATS (61 aa)). NAD(+)-binding positions include asparagine 119, 150–152 (DGE), lysine 155, 183–188 (GGVIGD), 208–209 (TT), lysine 221, lysine 230, and 248–251 (TLNT). An a divalent metal cation-binding site is contributed by glutamate 263. Lysine 305 serves as a coordination point for NAD(+). The a divalent metal cation site is built by histidine 326 and histidine 343.

This sequence belongs to the sugar phosphate cyclases superfamily. Dehydroquinate synthase family. Homodimer. A divalent metal cation serves as cofactor. NAD(+) is required as a cofactor. Highly expressed in roots. Lower expression in stems, flowers and cotyledons. Barely detected in leaves.

Its subcellular location is the plastid. It localises to the chloroplast. The catalysed reaction is 7-phospho-2-dehydro-3-deoxy-D-arabino-heptonate = 3-dehydroquinate + phosphate. It participates in metabolic intermediate biosynthesis; chorismate biosynthesis; chorismate from D-erythrose 4-phosphate and phosphoenolpyruvate: step 2/7. Catalyzes the second step in the shikimate pathway. This chain is 3-dehydroquinate synthase, chloroplastic (DHQS), found in Solanum lycopersicum (Tomato).